The sequence spans 286 residues: MEPSAEIPLGKGKETGRSPLIATRRKTGLVKAKIKTNSSFSMFRRADTMRTHAQFTNITVGWKSLCPITAEGQVNVAIYHESTRVPVLNLWSPVSSSWKHLATGSLGFVSLNHCPYVVEGRISGFEGEEAGLVTLTLHLDTGLESDDIQKCRLFSEHPELAGGSLYLYTSYTSSPIPDSNLPALRTEIDDTIAAIWRMSGGKMSITTSHALGLIATFRVKIESLLGEYPDDAFSAQVENLVKDFLLVSSTAEITRSYRTCLAKVLSSMTTYDKKYWDTIITGPSSI.

This sequence belongs to the nucleorhabdovirus type-1 movement protein family.

Functionally, transports viral genome to neighboring plant cells directly through plasmosdesmata, without any budding. The movement protein allows efficient cell to cell propagation, by bypassing the host cell wall barrier. The polypeptide is Putative movement protein 3 (3) (Rottboellia (Sorghum)).